The sequence spans 607 residues: Palmitoyltransferase erf2 (607 aa).

Disordered stretches follow at residues 1 to 198 (MSSA…SAKL) and 217 to 272 (ANHN…HHAP). At 1-305 (MSSAPETSDA…FQNSRDKPIN (305 aa)) the chain is on the cytoplasmic side. A compositionally biased stretch (low complexity) spans 53 to 66 (SSRPPQSQRSLSRR). 4 stretches are compositionally biased toward polar residues: residues 73–102 (SSIT…SLTA), 125–156 (ETAT…SSAP), 176–192 (RNTS…SRSV), and 227–242 (SQRS…NGNT). Basic and acidic residues predominate over residues 245-256 (EPRDNRAHERLS). Residues 257–272 (SADSSPGSIQKQHHAP) show a composition bias toward polar residues. Residues 306–326 (IATGIFVVLPSALFFAYSAPW) form a helical membrane-spanning segment. The Lumenal segment spans residues 327-330 (LWHH). Residues 331-351 (ISPAVPILFAYLFYICFSSFI) form a helical membrane-spanning segment. At 352 to 449 (HASVVDPGII…NCVGRRNYRY (98 aa)) the chain is on the cytoplasmic side. The region spanning 405 to 455 (KYCKTCNIWRPPRCYHCRVCDNCVETLDHHCVWLNNCVGRRNYRYFFAFVS) is the DHHC domain. Cysteine 435 acts as the S-palmitoyl cysteine intermediate in catalysis. Residues 450-470 (FFAFVSSATLLALFLLGASLA) form a helical membrane-spanning segment. Over 471 to 497 (HVLVYRAREGVSFGSAIDKWRVPWAMV) the chain is Lumenal. A helical transmembrane segment spans residues 498–518 (IYGALAAPYPASLWAYHLFLI). Over 519–607 (GRGETTREYL…QHVPPTPRQG (89 aa)) the chain is Cytoplasmic. A disordered region spans residues 570–607 (YQEGDQRLSAMKRKDRPRDVEAQADIEMQHVPPTPRQG).

Belongs to the DHHC palmitoyltransferase family. ERF2/ZDHHC9 subfamily. Post-translationally, autopalmitoylated.

It localises to the endoplasmic reticulum membrane. It carries out the reaction L-cysteinyl-[protein] + hexadecanoyl-CoA = S-hexadecanoyl-L-cysteinyl-[protein] + CoA. Palmitoyltransferase specific for Ras proteins. In Aspergillus fumigatus (strain ATCC MYA-4609 / CBS 101355 / FGSC A1100 / Af293) (Neosartorya fumigata), this protein is Palmitoyltransferase erf2 (erf2).